The following is a 232-amino-acid chain: Modulator of macroautophagy TMEM150B (232 aa).

At 1–6 (MWAWAL) the chain is on the cytoplasmic side. A helical membrane pass occupies residues 7 to 27 (LPVFLAVFGTVGLWAVYAIAV). Topologically, residues 28 to 50 (SNNSVNITIEFPYISTCGAYTPQ) are extracellular. N-linked (GlcNAc...) asparagine glycosylation is found at Asn-29 and Asn-33. The chain crosses the membrane as a helical span at residues 51-71 (SCLFAQICNICCVLALWIVVI). Topologically, residues 72 to 83 (RFQQIRDLGRSS) are cytoplasmic. A helical transmembrane segment spans residues 84 to 104 (HLNTAGLVLGFISSIGISILG). Residues 105 to 115 (NFQQTIIQEVH) lie on the Extracellular side of the membrane. A helical membrane pass occupies residues 116–136 (LLGALMAFFLGLAYFWIQAFI). Residues 137 to 153 (TYFSPPSRDNKWLVPVR) lie on the Cytoplasmic side of the membrane. A helical transmembrane segment spans residues 154 to 174 (FVLCSQCTCMVICMFVLHSTG). The Extracellular segment spans residues 175–177 (FRS). A helical membrane pass occupies residues 178–198 (AAAICEWILVMCFFALFGVFA). The Cytoplasmic segment spans residues 199-232 (AEFRHIDFHKLTVQKEGLKVANNDNVVWTVQDVQ).

It belongs to the DRAM/TMEM150 family.

It localises to the cell membrane. The protein localises to the endosome membrane. It is found in the cytoplasmic vesicle. Its subcellular location is the autophagosome membrane. Modulator of macroautophagy that causes accumulation of autophagosomes under basal conditions and enhances autophagic flux. Represses cell death and promotes long-term clonogenic survival of cells grown in the absence of glucose in a macroautophagy-independent manner. May have some role in extracellular matrix engulfment or growth factor receptor recycling, both of which can modulate cell survival. The sequence is that of Modulator of macroautophagy TMEM150B from Danio rerio (Zebrafish).